The primary structure comprises 114 residues: MARGGFPNFGGGGNMNNLMKQAQKFQKQMEDMQSELENKEFSATAGGEAITVVVNGKKQIVSIKIKPEVVDPEDVEMLEDLVLTACNQALKSAEDQTASEMKKLTGGLNIPGMF.

Belongs to the YbaB/EbfC family. In terms of assembly, homodimer.

It is found in the cytoplasm. The protein localises to the nucleoid. In terms of biological role, binds to DNA and alters its conformation. May be involved in regulation of gene expression, nucleoid organization and DNA protection. In Clostridium kluyveri (strain ATCC 8527 / DSM 555 / NBRC 12016 / NCIMB 10680 / K1), this protein is Nucleoid-associated protein CKL_3826.